The primary structure comprises 833 residues: Zinc phosphodiesterase ELAC protein 2 homolog (833 aa).

A mitochondrion-targeting transit peptide spans 1-19 (MLGAIARKTVENRILVSRH). Over residues 624–646 (LTPPGSPGGPPGKRPRLPSPHLP) the composition is skewed to pro residues. The tract at residues 624–652 (LTPPGSPGGPPGKRPRLPSPHLPPSRDVL) is disordered.

The protein belongs to the RNase Z family. In terms of assembly, homodimer. Requires Zn(2+) as cofactor. As to expression, highly expressed in the germline.

The protein localises to the mitochondrion. It localises to the nucleus. The enzyme catalyses Endonucleolytic cleavage of RNA, removing extra 3' nucleotides from tRNA precursor, generating 3' termini of tRNAs. A 3'-hydroxy group is left at the tRNA terminus and a 5'-phosphoryl group is left at the trailer molecule.. In terms of biological role, zinc phosphodiesterase, which displays some tRNA 3'-processing endonuclease activity. Probably involved in tRNA maturation, by removing a 3'-trailer from precursor tRNA. Involved in germline proliferation. May be required for both mitosis and meiosis in germ cells. Does not regulate the mitochondrial unfolded protein response following mitochondrial stress. Functionally, plays a role in mitochondrial unfolded protein response. Upon mitochondrial stress is exported from the nucleus where its tRNA endonuclease activity is negatively regulated. In response to mitochondrial stress, might be involved in activating a transcriptional response in an ATFS-1- and DVE-1-dependent manner. May play a role in negatively regulating the mitochondrial membrane potential. The protein is Zinc phosphodiesterase ELAC protein 2 homolog of Caenorhabditis elegans.